The sequence spans 78 residues: Probable [Fe-S]-dependent transcriptional repressor (78 aa).

4 residues coordinate iron-sulfur cluster: Cys56, Cys61, Cys64, and Cys70.

The protein belongs to the FeoC family.

Functionally, may function as a transcriptional regulator that controls feoABC expression. This chain is Probable [Fe-S]-dependent transcriptional repressor, found in Escherichia coli O7:K1 (strain IAI39 / ExPEC).